We begin with the raw amino-acid sequence, 353 residues long: MEKIQKITYKELVAEKVNDFNTTFVIEPLARGYANTMGTVLRRTLLSSITSVAPFAIKINNVEHEFQTISGLKEDAITLVRNIRNIRFVYNEEIFEKENLAKISFKTNKEGEIFASDIPEVSGLEIVNKDQYIANIAKGGSLEFDLFLRKGRGFIDFEENKNVISQYGSRLESSIKNGQFLAMDSDFSPVKKCAISFEELNSSSKLIEERLKIKIETDCTVSAKEAIEQAAKIIVAHFQIIGNINALETIELFEENKEKKEREIKSTTPITKLGLSVRSENALRRAKYNTVEEVLGLSDEELSNIKNLGKKSIQDIIEKRNEWKERIGYDDGQSDNFIIESLDQLNNSEEGEE.

The interval 1 to 245 (MEKIQKITYK…AHFQIIGNIN (245 aa)) is alpha N-terminal domain (alpha-NTD). Residues 261 to 353 (EREIKSTTPI…QLNNSEEGEE (93 aa)) are alpha C-terminal domain (alpha-CTD).

It belongs to the RNA polymerase alpha chain family. As to quaternary structure, homodimer. The RNAP catalytic core consists of 2 alpha, 1 beta, 1 beta' and 1 omega subunit. When a sigma factor is associated with the core the holoenzyme is formed, which can initiate transcription.

The catalysed reaction is RNA(n) + a ribonucleoside 5'-triphosphate = RNA(n+1) + diphosphate. DNA-dependent RNA polymerase catalyzes the transcription of DNA into RNA using the four ribonucleoside triphosphates as substrates. This chain is DNA-directed RNA polymerase subunit alpha, found in Mycoplasma sp.